Here is a 154-residue protein sequence, read N- to C-terminus: Aspartate carbamoyltransferase regulatory chain (154 aa).

Zn(2+)-binding residues include cysteine 109, cysteine 114, cysteine 138, and cysteine 141.

This sequence belongs to the PyrI family. In terms of assembly, contains catalytic and regulatory chains. Requires Zn(2+) as cofactor.

Its function is as follows. Involved in allosteric regulation of aspartate carbamoyltransferase. The chain is Aspartate carbamoyltransferase regulatory chain from Photobacterium profundum (strain SS9).